The primary structure comprises 491 residues: Cytochrome P450 81F2 (491 aa).

The helical transmembrane segment at 283–303 (VIIKGLMLSMMLAGTDTAAVT) threads the bilayer. Cys429 contributes to the heme binding site.

Belongs to the cytochrome P450 family. Requires heme as cofactor.

It is found in the membrane. Its pathway is secondary metabolite biosynthesis. Involved in indole glucosinolate biosynthesis. Catalyzes hydroxylation reactions of the glucosinolate indole ring. Converts indol-3-yl-methylglucosinolate (I3M) to 4-hydroxy-indol-3-yl-methylglucosinolate (4OH-I3M) and/or 1-hydroxy-indol-3-yl-methylglucosinolate (1OH-I3M) intermediates. These hydroxy intermediates are converted to 4-methoxy-indol-3-yl-methylglucosinolate (4MO-I3M) and 1-methoxy-indol-3-yl-methylglucosinolate (1MO-I3M) by indole glucosinolate methyltransferase 1 and 2 (IGMT1 and IGMT2). Contributes to defense against the green peach aphid (Myzus persicae), a generalist phloem-feeding herbivore. Required for the biosynthesis of antifungal indole glucosinolate metabolites. Required for the pathogen-induced accumulation of 4MO-I3M, which in turn is activated by the atypical BGLU26/PEN2 myrosinase. Required for the biosynthesis of Trp-derived antifungal compounds and non-host resistance to the necrotrophic fungal pathogen Plectosphaerella cucumerina. Required for resistance to the non-adapted fungal pathogen Colletotrichum gloeosporioides. The chain is Cytochrome P450 81F2 from Arabidopsis thaliana (Mouse-ear cress).